Consider the following 1227-residue polypeptide: Methionine synthase (1227 aa).

Residues 2–325 enclose the Hcy-binding domain; sequence SSKVEQLRAQ…EHIAAMSRAV (324 aa). Zn(2+) is bound by residues Cys-247, Cys-310, and Cys-311. A Pterin-binding domain is found at 356 to 617; it reads FVNVGERTNV…LPAELRDAVE (262 aa). One can recognise a B12-binding N-terminal domain in the interval 650 to 744; the sequence is QQAEWRSWDV…FIEASKEKGS (95 aa). Residues Glu-694, 756–760, His-759, Ser-804, Thr-808, and Ala-860 contribute to the methylcob(III)alamin site; that span reads GDVHD. Positions 746–881 constitute a B12-binding domain; sequence NGKMVIATVK…SDTQRDDFVA (136 aa). Residues 897-1227 enclose the AdoMet activation domain; that stretch reads KKPRTPPVTL…LAPNLGYDAD (331 aa). Residues Asp-946, Arg-1134, and 1189-1190 contribute to the S-adenosyl-L-methionine site; that span reads YF.

This sequence belongs to the vitamin-B12 dependent methionine synthase family. The cofactor is methylcob(III)alamin. Zn(2+) serves as cofactor.

The enzyme catalyses (6S)-5-methyl-5,6,7,8-tetrahydrofolate + L-homocysteine = (6S)-5,6,7,8-tetrahydrofolate + L-methionine. The protein operates within amino-acid biosynthesis; L-methionine biosynthesis via de novo pathway; L-methionine from L-homocysteine (MetH route): step 1/1. Catalyzes the transfer of a methyl group from methyl-cobalamin to homocysteine, yielding enzyme-bound cob(I)alamin and methionine. Subsequently, remethylates the cofactor using methyltetrahydrofolate. The sequence is that of Methionine synthase (metH) from Salmonella typhimurium (strain LT2 / SGSC1412 / ATCC 700720).